A 323-amino-acid polypeptide reads, in one-letter code: MSPTTQAWSINNTVVKENYYTEILSCITTFNTLNFLIVIISVVGMAGNATVLWLLGFHMHRNAFSVYVLNLAGADFLYLCAQTVYSLECVLQFDNSYFYFLLTILMFNYLAGFCMIAAISTERCLSVTWPIWYHCQRPRHTSATVCALFWAFSLLLSLLLGQGCGFLFSKFDYSFCRYCNFIATAFLIVIFMVLFVSSLALLAKIICGSHRIPVTRFYVTIALTVLVFIFFGLPIGICVFLLPWIHMMLSSFFYEMVTLLSCVNSCANPIIYFFVGSIRHHRLQRQTLKLLLQRAMQDTPEEEGGERGPSQKSEDLEVVRCSS.

Residues 1-34 lie on the Extracellular side of the membrane; the sequence is MSPTTQAWSINNTVVKENYYTEILSCITTFNTLN. N-linked (GlcNAc...) asparagine glycosylation is present at Asn-11. The helical transmembrane segment at 35 to 55 threads the bilayer; the sequence is FLIVIISVVGMAGNATVLWLL. Topologically, residues 56–63 are cytoplasmic; sequence GFHMHRNA. The chain crosses the membrane as a helical span at residues 64-84; the sequence is FSVYVLNLAGADFLYLCAQTV. The Extracellular segment spans residues 85-98; the sequence is YSLECVLQFDNSYF. Residues 99–119 form a helical membrane-spanning segment; sequence YFLLTILMFNYLAGFCMIAAI. The Cytoplasmic segment spans residues 120-147; sequence STERCLSVTWPIWYHCQRPRHTSATVCA. A helical membrane pass occupies residues 148–168; the sequence is LFWAFSLLLSLLLGQGCGFLF. Over 169–180 the chain is Extracellular; the sequence is SKFDYSFCRYCN. The chain crosses the membrane as a helical span at residues 181 to 201; sequence FIATAFLIVIFMVLFVSSLAL. At 202–224 the chain is on the cytoplasmic side; the sequence is LAKIICGSHRIPVTRFYVTIALT. Residues 225-245 traverse the membrane as a helical segment; it reads VLVFIFFGLPIGICVFLLPWI. The Extracellular portion of the chain corresponds to 246–255; the sequence is HMMLSSFFYE. The chain crosses the membrane as a helical span at residues 256-276; the sequence is MVTLLSCVNSCANPIIYFFVG. Over 277–323 the chain is Cytoplasmic; the sequence is SIRHHRLQRQTLKLLLQRAMQDTPEEEGGERGPSQKSEDLEVVRCSS. Residues 298-323 form a disordered region; the sequence is DTPEEEGGERGPSQKSEDLEVVRCSS. Positions 312 to 323 are enriched in basic and acidic residues; it reads KSEDLEVVRCSS.

It belongs to the G-protein coupled receptor 1 family. Mas subfamily. In terms of tissue distribution, expressed strongly in newborn dorsal root ganglia, adult dorsal root ganglia and trigeminal ganlia.

It localises to the membrane. Orphan receptor. Probably involved in the function of nociceptive neurons. May regulate nociceptor function and/or development, including the sensation or modulation of pain. The protein is Mas-related G-protein coupled receptor member B4 (Mrgprb4) of Rattus norvegicus (Rat).